The primary structure comprises 166 residues: Protein FAM163B (166 aa).

Residues 6-26 traverse the membrane as a helical segment; sequence VVITGGILATVILLCIIAVLC. Serine 40 is modified (phosphoserine).

This sequence belongs to the FAM163 family.

It localises to the membrane. This chain is Protein FAM163B (FAM163B), found in Homo sapiens (Human).